We begin with the raw amino-acid sequence, 43 residues long: Protein PsbN (43 aa).

A helical membrane pass occupies residues 7 to 29 (ITIFLSGLLVSFTGYALYTAFGQ).

Belongs to the PsbN family.

The protein resides in the plastid membrane. Functionally, may play a role in photosystem I and II biogenesis. In Cuscuta reflexa (Southern Asian dodder), this protein is Protein PsbN.